Here is a 715-residue protein sequence, read N- to C-terminus: Polyribonucleotide nucleotidyltransferase (715 aa).

Residues Asp487 and Asp493 each contribute to the Mg(2+) site. Positions 554-613 (PRIETFKIATDKIREVIGTGGKVIREIVEKTGAKVNIDDDGTVKVASSDGESIKAAIKWI) constitute a KH domain. Positions 623–691 (NAIYDGTVVK…DRGKTRLSMK (69 aa)) constitute an S1 motif domain. The tract at residues 696 to 715 (ETGEDLEAKQKAAEGATAAE) is disordered.

The protein belongs to the polyribonucleotide nucleotidyltransferase family. It depends on Mg(2+) as a cofactor.

It localises to the cytoplasm. It carries out the reaction RNA(n+1) + phosphate = RNA(n) + a ribonucleoside 5'-diphosphate. Its function is as follows. Involved in mRNA degradation. Catalyzes the phosphorolysis of single-stranded polyribonucleotides processively in the 3'- to 5'-direction. This Rhodopseudomonas palustris (strain BisB18) protein is Polyribonucleotide nucleotidyltransferase.